A 239-amino-acid chain; its full sequence is Probable GTP-binding protein EngB (239 aa).

Residues 23 to 219 (QVPEIAFAGR…NDKILELLGL (197 aa)) enclose the EngB-type G domain. GTP contacts are provided by residues 31–38 (GRSNAGKS), 58–62 (GRTQH), 92–95 (DLPG), 159–162 (TKSD), and 193–200 (FTAQLFSA). Mg(2+)-binding residues include Ser-38 and Thr-60.

This sequence belongs to the TRAFAC class TrmE-Era-EngA-EngB-Septin-like GTPase superfamily. EngB GTPase family. It depends on Mg(2+) as a cofactor.

In terms of biological role, necessary for normal cell division and for the maintenance of normal septation. The protein is Probable GTP-binding protein EngB of Herminiimonas arsenicoxydans.